The following is a 201-amino-acid chain: Large ribosomal subunit protein bL25 (201 aa).

The protein belongs to the bacterial ribosomal protein bL25 family. CTC subfamily. As to quaternary structure, part of the 50S ribosomal subunit; part of the 5S rRNA/L5/L18/L25 subcomplex. Contacts the 5S rRNA. Binds to the 5S rRNA independently of L5 and L18.

Its function is as follows. This is one of the proteins that binds to the 5S RNA in the ribosome where it forms part of the central protuberance. The polypeptide is Large ribosomal subunit protein bL25 (Burkholderia cenocepacia (strain HI2424)).